Here is a 433-residue protein sequence, read N- to C-terminus: Histidinol dehydrogenase (433 aa).

The NAD(+) site is built by Tyr129, Gln191, and Asn214. 3 residues coordinate substrate: Ser237, Gln259, and His262. Positions 259 and 262 each coordinate Zn(2+). Residues Glu326 and His327 each act as proton acceptor in the active site. Positions 327, 360, 414, and 419 each coordinate substrate. A Zn(2+)-binding site is contributed by Asp360. Zn(2+) is bound at residue His419.

The protein belongs to the histidinol dehydrogenase family. Requires Zn(2+) as cofactor.

It catalyses the reaction L-histidinol + 2 NAD(+) + H2O = L-histidine + 2 NADH + 3 H(+). It functions in the pathway amino-acid biosynthesis; L-histidine biosynthesis; L-histidine from 5-phospho-alpha-D-ribose 1-diphosphate: step 9/9. Catalyzes the sequential NAD-dependent oxidations of L-histidinol to L-histidinaldehyde and then to L-histidine. This is Histidinol dehydrogenase from Methanosarcina mazei (strain ATCC BAA-159 / DSM 3647 / Goe1 / Go1 / JCM 11833 / OCM 88) (Methanosarcina frisia).